The primary structure comprises 324 residues: Acetyl-coenzyme A carboxylase carboxyl transferase subunit alpha (324 aa).

The 255-residue stretch at 37–291 (ILEEKLENLE…DLMIRKTFEQ (255 aa)) folds into the CoA carboxyltransferase C-terminal domain.

Belongs to the AccA family. As to quaternary structure, acetyl-CoA carboxylase is a heterohexamer composed of biotin carboxyl carrier protein (AccB), biotin carboxylase (AccC) and two subunits each of ACCase subunit alpha (AccA) and ACCase subunit beta (AccD).

It localises to the cytoplasm. It carries out the reaction N(6)-carboxybiotinyl-L-lysyl-[protein] + acetyl-CoA = N(6)-biotinyl-L-lysyl-[protein] + malonyl-CoA. Its pathway is lipid metabolism; malonyl-CoA biosynthesis; malonyl-CoA from acetyl-CoA: step 1/1. Functionally, component of the acetyl coenzyme A carboxylase (ACC) complex. First, biotin carboxylase catalyzes the carboxylation of biotin on its carrier protein (BCCP) and then the CO(2) group is transferred by the carboxyltransferase to acetyl-CoA to form malonyl-CoA. The sequence is that of Acetyl-coenzyme A carboxylase carboxyl transferase subunit alpha from Bacillus cereus (strain B4264).